The chain runs to 510 residues: tRNA(Ile)-lysidine synthase (510 aa).

An ATP-binding site is contributed by 32–37; the sequence is SGGLDS.

The protein belongs to the tRNA(Ile)-lysidine synthase family.

Its subcellular location is the cytoplasm. The enzyme catalyses cytidine(34) in tRNA(Ile2) + L-lysine + ATP = lysidine(34) in tRNA(Ile2) + AMP + diphosphate + H(+). In terms of biological role, ligates lysine onto the cytidine present at position 34 of the AUA codon-specific tRNA(Ile) that contains the anticodon CAU, in an ATP-dependent manner. Cytidine is converted to lysidine, thus changing the amino acid specificity of the tRNA from methionine to isoleucine. The polypeptide is tRNA(Ile)-lysidine synthase (Blochmanniella pennsylvanica (strain BPEN)).